A 257-amino-acid polypeptide reads, in one-letter code: MADS-box transcription factor 1 (257 aa).

In terms of domain architecture, MADS-box spans 1 to 61; sequence MGRGKVELKR…GRLFEFSSSS (61 aa). One can recognise a K-box domain in the interval 85-175; sequence NEINYQEYLK…RKKLQETSAE (91 aa).

As to quaternary structure, may interact with the K-box of MADS6, MADS14 and MADS15.

The protein localises to the nucleus. In terms of biological role, probable transcription factor involved in the development of floral organs. Required for the formation of inner floral organs (lodicules, stamens and carpels, or whorls 2, 3 and 4) and the lemma and palea (whorl 1), which are grass floral organs analogous to sepals. May be involved in the control of flowering time. Seems to act as transcriptional activator. May act upstream of the auxin-responsive protein GH3.8. The protein is MADS-box transcription factor 1 (MADS1) of Oryza sativa subsp. indica (Rice).